The sequence spans 138 residues: Small ribosomal subunit protein uS12 (138 aa).

Positions 1–20 are disordered; sequence MPTISQLINHGRSAKTSKSK. At D102 the chain carries 3-methylthioaspartic acid. A disordered region spans residues 116 to 138; it reads DAAGVDKRKQGRSIYGTKKPKEN.

It belongs to the universal ribosomal protein uS12 family. Part of the 30S ribosomal subunit. Contacts proteins S8 and S17. May interact with IF1 in the 30S initiation complex.

In terms of biological role, with S4 and S5 plays an important role in translational accuracy. Interacts with and stabilizes bases of the 16S rRNA that are involved in tRNA selection in the A site and with the mRNA backbone. Located at the interface of the 30S and 50S subunits, it traverses the body of the 30S subunit contacting proteins on the other side and probably holding the rRNA structure together. The combined cluster of proteins S8, S12 and S17 appears to hold together the shoulder and platform of the 30S subunit. This is Small ribosomal subunit protein uS12 from Metamycoplasma arthritidis (strain 158L3-1) (Mycoplasma arthritidis).